The primary structure comprises 883 residues: Phosphoenolpyruvate carboxylase (883 aa).

Active-site residues include H138 and K546.

Belongs to the PEPCase type 1 family. Requires Mg(2+) as cofactor.

It catalyses the reaction oxaloacetate + phosphate = phosphoenolpyruvate + hydrogencarbonate. Forms oxaloacetate, a four-carbon dicarboxylic acid source for the tricarboxylic acid cycle. The sequence is that of Phosphoenolpyruvate carboxylase from Klebsiella pneumoniae (strain 342).